The primary structure comprises 67 residues: Histone H2A (67 aa).

The residue at position 60 (Q60) is an N5-methylglutamine.

Belongs to the histone H2A family. The nucleosome is a histone octamer containing two molecules each of H2A, H2B, H3 and H4 assembled in one H3-H4 heterotetramer and two H2A-H2B heterodimers. The octamer wraps approximately 147 bp of DNA.

The protein resides in the nucleus. It is found in the chromosome. Functionally, core component of nucleosome. Nucleosomes wrap and compact DNA into chromatin, limiting DNA accessibility to the cellular machineries which require DNA as a template. Histones thereby play a central role in transcription regulation, DNA repair, DNA replication and chromosomal stability. DNA accessibility is regulated via a complex set of post-translational modifications of histones, also called histone code, and nucleosome remodeling. The chain is Histone H2A from Olisthodiscus luteus (Marine phytoflagellate).